A 414-amino-acid polypeptide reads, in one-letter code: Enterobactin exporter EntS (414 aa).

Residues 1–21 (MNRQSWLLNLSLLKTHPAFRA) are Cytoplasmic-facing. Residues 22-42 (VFLARFISIVSLGLLGVAVPV) traverse the membrane as a helical segment. Residues 43–55 (QIQMMTHSTWQVG) lie on the Periplasmic side of the membrane. A helical transmembrane segment spans residues 56–76 (LSVTLTGGAMFIGLMVGGVLA). At 77–83 (DRYERKK) the chain is on the cytoplasmic side. Residues 84-104 (VILLARGTCGIGFIGLCVNAL) traverse the membrane as a helical segment. The Periplasmic portion of the chain corresponds to 105–109 (LPEPS). A helical transmembrane segment spans residues 110–130 (LLAIYLLGLWDGFFASLGVTA). Over 131–156 (LLAATPALVGRENLMQAGAITMLTVR) the chain is Cytoplasmic. Residues 157–177 (LGSVISPMLGGILLASGGVAW) traverse the membrane as a helical segment. N178 is a topological domain (periplasmic). The chain crosses the membrane as a helical span at residues 179-199 (YGLAAAGTFITLLPLLTLPRL). Topologically, residues 200–218 (PVPPQPRENPFIALLAAFR) are cytoplasmic. A helical membrane pass occupies residues 219 to 239 (FLLASPLIGGIALLGGLVTMA). The Periplasmic portion of the chain corresponds to 240 to 256 (SAVRVLYPALAMSWQMS). The chain crosses the membrane as a helical span at residues 257 to 277 (AAQIGLLYAAIPLGAAIGALT). At 278–287 (SGQLAHSVRP) the chain is on the cytoplasmic side. A helical membrane pass occupies residues 288–307 (GLIMLVSTVGSFLAVGLFAI). The Periplasmic portion of the chain corresponds to 308–313 (MPVWIA). The chain crosses the membrane as a helical span at residues 314–336 (GVICLALFGWLSAISSLLQYTLL). The Cytoplasmic portion of the chain corresponds to 337 to 356 (QTQTPENMLGRMNGLWTAQN). A helical membrane pass occupies residues 357-377 (VTGDAIGAALLGGLGAMMTPV). Residue A378 is a topological domain, periplasmic. A helical transmembrane segment spans residues 379 to 399 (SASVSGFGLVIIGLLLLLVLG). Residues 400–414 (ELRRFRQTPPVSDAG) are Cytoplasmic-facing.

This sequence belongs to the major facilitator superfamily. EntS (TC 2.A.1.38) family.

Its subcellular location is the cell inner membrane. Functionally, component of an export pathway for enterobactin. The polypeptide is Enterobactin exporter EntS (Salmonella typhimurium (strain LT2 / SGSC1412 / ATCC 700720)).